A 668-amino-acid polypeptide reads, in one-letter code: DNA ligase (668 aa).

Residues 31–35 (DAEYD), 80–81 (SL), and glutamate 112 each bind NAD(+). Lysine 114 serves as the catalytic N6-AMP-lysine intermediate. Positions 135, 172, 289, and 313 each coordinate NAD(+). 4 residues coordinate Zn(2+): cysteine 407, cysteine 410, cysteine 425, and cysteine 431. The region spanning 591-668 (SVPQPLAGKV…NEEQLIELLN (78 aa)) is the BRCT domain.

Belongs to the NAD-dependent DNA ligase family. LigA subfamily. Mg(2+) is required as a cofactor. It depends on Mn(2+) as a cofactor.

It carries out the reaction NAD(+) + (deoxyribonucleotide)n-3'-hydroxyl + 5'-phospho-(deoxyribonucleotide)m = (deoxyribonucleotide)n+m + AMP + beta-nicotinamide D-nucleotide.. In terms of biological role, DNA ligase that catalyzes the formation of phosphodiester linkages between 5'-phosphoryl and 3'-hydroxyl groups in double-stranded DNA using NAD as a coenzyme and as the energy source for the reaction. It is essential for DNA replication and repair of damaged DNA. In Aliivibrio fischeri (strain MJ11) (Vibrio fischeri), this protein is DNA ligase.